A 127-amino-acid chain; its full sequence is uncharacterized protein (127 aa).

A run of 2 helical transmembrane segments spans residues 64–84 and 101–118; these read GYYI…FGYL and FFHF…AIYY.

Its subcellular location is the membrane. This is an uncharacterized protein from Saccharomyces cerevisiae (strain ATCC 204508 / S288c) (Baker's yeast).